A 452-amino-acid polypeptide reads, in one-letter code: Transcription factor ETV6 (452 aa).

Over residues 1 to 10 (MSETPAQCSI) the composition is skewed to polar residues. The disordered stretch occupies residues 1–30 (MSETPAQCSIKQERISYTPPESPVPSYASS). Position 11 is an N6-acetyllysine; alternate (Lys11). Residue Lys11 forms a Glycyl lysine isopeptide (Lys-Gly) (interchain with G-Cter in SUMO2); alternate linkage. Thr18 bears the Phosphothreonine mark. Residue Ser22 is modified to Phosphoserine. The region spanning 40–124 (ALRMEEDSIR…ELLQHILKQR (85 aa)) is the PNT domain. The interval 158–262 (VQRTPRPSVD…PKPSSPRQES (105 aa)) is disordered. Residues Ser213 and Ser238 each carry the phosphoserine modification. A compositionally biased stretch (polar residues) spans 230 to 250 (QESYPLSVSPMENNHCPASSE). Residue Ser257 is modified to Phosphoserine; by MAPK14. Residue Lys288 forms a Glycyl lysine isopeptide (Lys-Gly) (interchain with G-Cter in SUMO2) linkage. Lys302 carries the post-translational modification N6-acetyllysine; alternate. A Glycyl lysine isopeptide (Lys-Gly) (interchain with G-Cter in SUMO2); alternate cross-link involves residue Lys302. Ser323 bears the Phosphoserine mark. A DNA-binding region (ETS) is located at residues 339–420 (RLLWDYVYQL…PGQRLLFRFM (82 aa)). Glycyl lysine isopeptide (Lys-Gly) (interchain with G-Cter in SUMO2) cross-links involve residues Lys403 and Lys421.

The protein belongs to the ETS family. As to quaternary structure, can form homodimers or heterodimers with TEL2 or FLI1. Interacts with L3MBTL1 and HDAC9. In terms of processing, phosphorylation of Ser-257 by MAPK14 (p38) inhibits ETV6 transcriptional repression. In terms of tissue distribution, ubiquitous.

Its subcellular location is the nucleus. In terms of biological role, transcriptional repressor; binds to the DNA sequence 5'-CCGGAAGT-3'. Plays a role in hematopoiesis and malignant transformation. The protein is Transcription factor ETV6 (ETV6) of Homo sapiens (Human).